A 266-amino-acid polypeptide reads, in one-letter code: Non-structural maintenance of chromosomes element 1 homolog (266 aa).

Residues 1–102 (MQGSTRRAGA…SVSKMATDFA (102 aa)) form an interaction with NSMCE3 region. The segment at 191-232 (CNICHGLLIQGQSCETCGIRMHLPCVAKYFQSIPEPHCPHCN) adopts an RING-type; atypical zinc-finger fold. Positions 246 to 266 (EKEREAGISKSSRKSLRTRQH) are disordered. A compositionally biased stretch (basic residues) spans 256–266 (SSRKSLRTRQH).

It belongs to the NSE1 family. As to quaternary structure, component of the SMC5-SMC6 complex which consists at least of SMC5, SMC6, NSMCE2, NSMCE1, NSMCE4A or EID3 and NSMCE3. NSMCE1, NSMCE4A or EID3 and NSMCE3 probably form a subcomplex that bridges the head domains of the SMC5-SMC6 heterodimer. Interacts with NSMCE3. Ubiquitinated.

The protein localises to the nucleus. The protein resides in the chromosome. Its subcellular location is the telomere. It catalyses the reaction S-ubiquitinyl-[E2 ubiquitin-conjugating enzyme]-L-cysteine + [acceptor protein]-L-lysine = [E2 ubiquitin-conjugating enzyme]-L-cysteine + N(6)-ubiquitinyl-[acceptor protein]-L-lysine.. Its function is as follows. RING-type zinc finger-containing E3 ubiquitin ligase that assembles with melanoma antigen protein (MAGE) to catalyze the direct transfer of ubiquitin from E2 ubiquitin-conjugating enzyme to a specific substrate. Within MAGE-RING ubiquitin ligase complex, MAGE stimulates and specifies ubiquitin ligase activity likely through recruitment and/or stabilization of the E2 ubiquitin-conjugating enzyme at the E3:substrate complex. Involved in maintenance of genome integrity, DNA damage response and DNA repair. NSMCE3/MAGEG1 and NSMCE1 ubiquitin ligase are components of SMC5-SMC6 complex and may positively regulate homologous recombination-mediated DNA repair. The sequence is that of Non-structural maintenance of chromosomes element 1 homolog (Nsmce1) from Mus musculus (Mouse).